A 310-amino-acid polypeptide reads, in one-letter code: Apolipoprotein E (310 aa).

An N-terminal signal peptide occupies residues 1–18 (MKVLWPALVVTLLAGCRA). 8 tandem repeats follow at residues 77 to 98 (ALMD…EQLG), 99 to 120 (PVAE…ARLG), 121 to 142 (ADME…AMVG), 143 to 164 (QSTE…KRLL), 165 to 186 (RDAE…EGAE), 187 to 208 (RSVN…TMHT), 209 to 226 (LVSK…QRLR), and 227 to 248 (GRLE…EQVQ). Positions 77–248 (ALMDDTMKEV…RLDEVREQVQ (172 aa)) are 8 X 22 AA approximate tandem repeats. Positions 155–165 (HLRKLRKRLLR) are LDL and other lipoprotein receptors binding. 159 to 162 (LRKR) provides a ligand contact to heparin. Positions 207–283 (HTLVSKPLQE…SWFEPLVQDM (77 aa)) are lipid-binding and lipoprotein association. 222–229 (AQRLRGRL) serves as a coordination point for heparin. The homooligomerization stretch occupies residues 259-310 (NQVRLQAEAFQGRLKSWFEPLVQDMQQKWAELVEKVQLALRAVPTSVPSEKQ). Residues 271-283 (RLKSWFEPLVQDM) form a specificity for association with VLDL region.

The protein belongs to the apolipoprotein A1/A4/E family. As to quaternary structure, homotetramer. May interact with ABCA1; functionally associated with ABCA1 in the biogenesis of HDLs. May interact with APP/A4 amyloid-beta peptide; the interaction is extremely stable in vitro but its physiological significance is unclear. May interact with MAPT. May interact with MAP2. In the cerebrospinal fluid, interacts with secreted SORL1. Interacts with PMEL; this allows the loading of PMEL luminal fragment on ILVs to induce fibril nucleation. Post-translationally, APOE exists as multiple glycosylated and sialylated glycoforms within cells and in plasma. The extent of glycosylation and sialylation are tissue and context specific. Glycated in plasma VLDL. In terms of processing, phosphorylated by FAM20C in the extracellular medium.

It is found in the secreted. Its subcellular location is the extracellular space. The protein resides in the extracellular matrix. It localises to the extracellular vesicle. The protein localises to the endosome. It is found in the multivesicular body. APOE is an apolipoprotein, a protein associating with lipid particles, that mainly functions in lipoprotein-mediated lipid transport between organs via the plasma and interstitial fluids. APOE is a core component of plasma lipoproteins and is involved in their production, conversion and clearance. Apolipoproteins are amphipathic molecules that interact both with lipids of the lipoprotein particle core and the aqueous environment of the plasma. As such, APOE associates with chylomicrons, chylomicron remnants, very low density lipoproteins (VLDL) and intermediate density lipoproteins (IDL) but shows a preferential binding to high-density lipoproteins (HDL). It also binds a wide range of cellular receptors including the LDL receptor/LDLR and the very low-density lipoprotein receptor/VLDLR that mediate the cellular uptake of the APOE-containing lipoprotein particles. Finally, APOE also has a heparin-binding activity and binds heparan-sulfate proteoglycans on the surface of cells, a property that supports the capture and the receptor-mediated uptake of APOE-containing lipoproteins by cells. This Dicerorhinus sumatrensis harrissoni (Bornean rhinoceros) protein is Apolipoprotein E (APOE).